The sequence spans 156 residues: Small ribosomal subunit protein uS7 (156 aa).

The protein belongs to the universal ribosomal protein uS7 family. In terms of assembly, part of the 30S ribosomal subunit. Contacts proteins S9 and S11.

Its function is as follows. One of the primary rRNA binding proteins, it binds directly to 16S rRNA where it nucleates assembly of the head domain of the 30S subunit. Is located at the subunit interface close to the decoding center, probably blocks exit of the E-site tRNA. In Vibrio vulnificus (strain CMCP6), this protein is Small ribosomal subunit protein uS7.